Consider the following 358-residue polypeptide: Peptide chain release factor 1 (358 aa).

At Gln-236 the chain carries N5-methylglutamine.

It belongs to the prokaryotic/mitochondrial release factor family. Methylated by PrmC. Methylation increases the termination efficiency of RF1.

It is found in the cytoplasm. In terms of biological role, peptide chain release factor 1 directs the termination of translation in response to the peptide chain termination codons UAG and UAA. This Corynebacterium efficiens (strain DSM 44549 / YS-314 / AJ 12310 / JCM 11189 / NBRC 100395) protein is Peptide chain release factor 1.